The sequence spans 225 residues: Cytidylate kinase (225 aa).

ATP is bound at residue 11-19; that stretch reads GPAAAGKST.

The protein belongs to the cytidylate kinase family. Type 1 subfamily.

The protein resides in the cytoplasm. It carries out the reaction CMP + ATP = CDP + ADP. It catalyses the reaction dCMP + ATP = dCDP + ADP. The protein is Cytidylate kinase of Bacillus cytotoxicus (strain DSM 22905 / CIP 110041 / 391-98 / NVH 391-98).